The chain runs to 268 residues: Tryptophan synthase alpha chain (268 aa).

Catalysis depends on proton acceptor residues glutamate 40 and aspartate 51.

Belongs to the TrpA family. In terms of assembly, tetramer of two alpha and two beta chains.

It carries out the reaction (1S,2R)-1-C-(indol-3-yl)glycerol 3-phosphate + L-serine = D-glyceraldehyde 3-phosphate + L-tryptophan + H2O. The protein operates within amino-acid biosynthesis; L-tryptophan biosynthesis; L-tryptophan from chorismate: step 5/5. Its function is as follows. The alpha subunit is responsible for the aldol cleavage of indoleglycerol phosphate to indole and glyceraldehyde 3-phosphate. The chain is Tryptophan synthase alpha chain from Geobacillus kaustophilus (strain HTA426).